The following is a 355-amino-acid chain: Peptide chain release factor 1 (355 aa).

Glutamine 232 bears the N5-methylglutamine mark. The disordered stretch occupies residues 282 to 309; the sequence is EQNASISAERKSQVGSGDRSERIRTYNY. Over residues 289-305 the composition is skewed to basic and acidic residues; it reads AERKSQVGSGDRSERIR.

This sequence belongs to the prokaryotic/mitochondrial release factor family. In terms of processing, methylated by PrmC. Methylation increases the termination efficiency of RF1.

It is found in the cytoplasm. Functionally, peptide chain release factor 1 directs the termination of translation in response to the peptide chain termination codons UAG and UAA. This chain is Peptide chain release factor 1, found in Desulfatibacillum aliphaticivorans.